Consider the following 469-residue polypeptide: 3-isopropylmalate dehydratase large subunit (469 aa).

The [4Fe-4S] cluster site is built by Cys349, Cys410, and Cys413.

The protein belongs to the aconitase/IPM isomerase family. LeuC type 1 subfamily. As to quaternary structure, heterodimer of LeuC and LeuD. Requires [4Fe-4S] cluster as cofactor.

It catalyses the reaction (2R,3S)-3-isopropylmalate = (2S)-2-isopropylmalate. It participates in amino-acid biosynthesis; L-leucine biosynthesis; L-leucine from 3-methyl-2-oxobutanoate: step 2/4. In terms of biological role, catalyzes the isomerization between 2-isopropylmalate and 3-isopropylmalate, via the formation of 2-isopropylmaleate. The sequence is that of 3-isopropylmalate dehydratase large subunit from Neisseria gonorrhoeae (strain ATCC 700825 / FA 1090).